The sequence spans 286 residues: Bifunctional protein FolD (286 aa).

Residues 165-167 (GRS), S190, and V231 contribute to the NADP(+) site.

Belongs to the tetrahydrofolate dehydrogenase/cyclohydrolase family. In terms of assembly, homodimer.

It carries out the reaction (6R)-5,10-methylene-5,6,7,8-tetrahydrofolate + NADP(+) = (6R)-5,10-methenyltetrahydrofolate + NADPH. The enzyme catalyses (6R)-5,10-methenyltetrahydrofolate + H2O = (6R)-10-formyltetrahydrofolate + H(+). It functions in the pathway one-carbon metabolism; tetrahydrofolate interconversion. In terms of biological role, catalyzes the oxidation of 5,10-methylenetetrahydrofolate to 5,10-methenyltetrahydrofolate and then the hydrolysis of 5,10-methenyltetrahydrofolate to 10-formyltetrahydrofolate. In Bacillus cereus (strain ZK / E33L), this protein is Bifunctional protein FolD.